We begin with the raw amino-acid sequence, 369 residues long: Chaperone protein DnaJ (369 aa).

Residues 7–73 (DYYEILGVPR…QKRAMYDRFG (67 aa)) form the J domain. The segment at 143–225 (GAEIPVEYER…CGGSGRVLRK (83 aa)) adopts a CR-type zinc-finger fold. Residues C156, C159, C173, C176, C199, C202, C213, and C216 each contribute to the Zn(2+) site. CXXCXGXG motif repeat units follow at residues 156–163 (CPRCGGTG), 173–180 (CPSCGGTG), 199–206 (CERCGGTG), and 213–220 (CHECGGSG).

The protein belongs to the DnaJ family. Homodimer. Zn(2+) serves as cofactor.

It is found in the cytoplasm. Participates actively in the response to hyperosmotic and heat shock by preventing the aggregation of stress-denatured proteins and by disaggregating proteins, also in an autonomous, DnaK-independent fashion. Unfolded proteins bind initially to DnaJ; upon interaction with the DnaJ-bound protein, DnaK hydrolyzes its bound ATP, resulting in the formation of a stable complex. GrpE releases ADP from DnaK; ATP binding to DnaK triggers the release of the substrate protein, thus completing the reaction cycle. Several rounds of ATP-dependent interactions between DnaJ, DnaK and GrpE are required for fully efficient folding. Also involved, together with DnaK and GrpE, in the DNA replication of plasmids through activation of initiation proteins. This chain is Chaperone protein DnaJ, found in Thermotoga maritima (strain ATCC 43589 / DSM 3109 / JCM 10099 / NBRC 100826 / MSB8).